A 323-amino-acid polypeptide reads, in one-letter code: 4-hydroxy-3-methylbut-2-enyl diphosphate reductase (323 aa).

Cysteine 21 serves as a coordination point for [4Fe-4S] cluster. Residues histidine 50 and histidine 83 each contribute to the (2E)-4-hydroxy-3-methylbut-2-enyl diphosphate site. The dimethylallyl diphosphate site is built by histidine 50 and histidine 83. Residues histidine 50 and histidine 83 each coordinate isopentenyl diphosphate. Cysteine 105 lines the [4Fe-4S] cluster pocket. Histidine 133 contacts (2E)-4-hydroxy-3-methylbut-2-enyl diphosphate. A dimethylallyl diphosphate-binding site is contributed by histidine 133. Histidine 133 is a binding site for isopentenyl diphosphate. The active-site Proton donor is the glutamate 135. Threonine 173 provides a ligand contact to (2E)-4-hydroxy-3-methylbut-2-enyl diphosphate. Residue cysteine 203 participates in [4Fe-4S] cluster binding. (2E)-4-hydroxy-3-methylbut-2-enyl diphosphate contacts are provided by serine 231, serine 232, asparagine 233, and serine 276. The dimethylallyl diphosphate site is built by serine 231, serine 232, asparagine 233, and serine 276. Residues serine 231, serine 232, asparagine 233, and serine 276 each contribute to the isopentenyl diphosphate site.

This sequence belongs to the IspH family. Requires [4Fe-4S] cluster as cofactor.

It carries out the reaction isopentenyl diphosphate + 2 oxidized [2Fe-2S]-[ferredoxin] + H2O = (2E)-4-hydroxy-3-methylbut-2-enyl diphosphate + 2 reduced [2Fe-2S]-[ferredoxin] + 2 H(+). The enzyme catalyses dimethylallyl diphosphate + 2 oxidized [2Fe-2S]-[ferredoxin] + H2O = (2E)-4-hydroxy-3-methylbut-2-enyl diphosphate + 2 reduced [2Fe-2S]-[ferredoxin] + 2 H(+). It functions in the pathway isoprenoid biosynthesis; dimethylallyl diphosphate biosynthesis; dimethylallyl diphosphate from (2E)-4-hydroxy-3-methylbutenyl diphosphate: step 1/1. It participates in isoprenoid biosynthesis; isopentenyl diphosphate biosynthesis via DXP pathway; isopentenyl diphosphate from 1-deoxy-D-xylulose 5-phosphate: step 6/6. Its function is as follows. Catalyzes the conversion of 1-hydroxy-2-methyl-2-(E)-butenyl 4-diphosphate (HMBPP) into a mixture of isopentenyl diphosphate (IPP) and dimethylallyl diphosphate (DMAPP). Acts in the terminal step of the DOXP/MEP pathway for isoprenoid precursor biosynthesis. This Cutibacterium acnes (strain DSM 16379 / KPA171202) (Propionibacterium acnes) protein is 4-hydroxy-3-methylbut-2-enyl diphosphate reductase.